A 59-amino-acid polypeptide reads, in one-letter code: MAQTIKITQTRSSIGRLPKHKATLVGLGLRRIGHTVEREDTPAVRGMVNLVSYMVKVEE.

The protein belongs to the universal ribosomal protein uL30 family. Part of the 50S ribosomal subunit.

This Sodalis glossinidius (strain morsitans) protein is Large ribosomal subunit protein uL30.